The sequence spans 299 residues: ATP phosphoribosyltransferase (299 aa).

The protein belongs to the ATP phosphoribosyltransferase family. Long subfamily. It depends on Mg(2+) as a cofactor.

The protein localises to the cytoplasm. The enzyme catalyses 1-(5-phospho-beta-D-ribosyl)-ATP + diphosphate = 5-phospho-alpha-D-ribose 1-diphosphate + ATP. Its pathway is amino-acid biosynthesis; L-histidine biosynthesis; L-histidine from 5-phospho-alpha-D-ribose 1-diphosphate: step 1/9. Its activity is regulated as follows. Feedback inhibited by histidine. Catalyzes the condensation of ATP and 5-phosphoribose 1-diphosphate to form N'-(5'-phosphoribosyl)-ATP (PR-ATP). Has a crucial role in the pathway because the rate of histidine biosynthesis seems to be controlled primarily by regulation of HisG enzymatic activity. This chain is ATP phosphoribosyltransferase, found in Campylobacter jejuni subsp. jejuni serotype O:2 (strain ATCC 700819 / NCTC 11168).